We begin with the raw amino-acid sequence, 150 residues long: Small ribosomal subunit protein uS11 (150 aa).

Residues 130–150 are disordered; it reads DVTPIPSDSTRRKSGRRGRRL. Residues 141 to 150 are compositionally biased toward basic residues; that stretch reads RKSGRRGRRL.

The protein belongs to the universal ribosomal protein uS11 family.

The chain is Small ribosomal subunit protein uS11 (RPS14) from Lupinus luteus (European yellow lupine).